The primary structure comprises 130 residues: Small ribosomal subunit protein uS8 (130 aa).

The protein belongs to the universal ribosomal protein uS8 family. In terms of assembly, part of the 30S ribosomal subunit. Contacts proteins S5 and S12.

Its function is as follows. One of the primary rRNA binding proteins, it binds directly to 16S rRNA central domain where it helps coordinate assembly of the platform of the 30S subunit. This is Small ribosomal subunit protein uS8 from Alcanivorax borkumensis (strain ATCC 700651 / DSM 11573 / NCIMB 13689 / SK2).